We begin with the raw amino-acid sequence, 264 residues long: Cell cycle regulator CcrZ (264 aa).

Residues Phe-32, Trp-70, and Gly-73 each contribute to the ATP site. The Brenner's motif [HXDhX3N] signature appears at 157–164; sequence HGDVRHSN. The active-site Proton acceptor is the Asp-159. The short motif at 173–196 is the APH element; it reads IYLVDWDSVRLTDRMFDVAHMLCH.

The protein belongs to the aminoglycoside phosphotransferase family. Monomer in solution. Interacts with DnaA (via domains I (1-82) and III (111-326)). Interacts with DnaB. Interacts with FtsZ; the interaction is direct and ensures correct localization during the cell cycle.

Its subcellular location is the cytoplasm. It catalyses the reaction D-ribose + ATP = D-ribose 5-phosphate + ADP + H(+). The enzyme catalyses 2-deoxy-D-ribose + ATP = 2-deoxy-D-ribose 5-phosphate + ADP + H(+). In terms of biological role, plays a role in cell cycle regulation and chromosome integrity. Activates DnaA-dependent chromosomal DNA replication initiation ensuring that the chromosome is replicated at the right time during the cell cycle. May regulate replication initiation through phosphorylation of a possible second messenger or metabolite, and by interacting with replication initiation proteins. Has ATPase activity with D-ribose and 2-deoxy-D-ribose in vitro, but not with choline. Involved in DNA damage response. The protein is Cell cycle regulator CcrZ of Streptococcus pneumoniae serotype 2 (strain D39 / NCTC 7466).